The primary structure comprises 561 residues: Potassium-transporting ATPase potassium-binding subunit (561 aa).

11 consecutive transmembrane segments (helical) span residues 5–25 (IELF…GTYM), 63–83 (KYAL…YFIL), 103–122 (LAFN…HYAG), 133–153 (IVIV…AAAI), 179–199 (LLPI…PQTF), 255–275 (IEML…GLMI), 281–301 (ALVL…GAVY), 380–400 (AGLQ…GLMV), 418–438 (LIAL…ALTV), 485–505 (IMTG…MLAV), and 531–551 (AIFI…AVIL).

It belongs to the KdpA family. As to quaternary structure, the system is composed of three essential subunits: KdpA, KdpB and KdpC.

The protein localises to the cell membrane. Part of the high-affinity ATP-driven potassium transport (or Kdp) system, which catalyzes the hydrolysis of ATP coupled with the electrogenic transport of potassium into the cytoplasm. This subunit binds the extracellular potassium ions and delivers the ions to the membrane domain of KdpB through an intramembrane tunnel. This is Potassium-transporting ATPase potassium-binding subunit from Caldanaerobacter subterraneus subsp. tengcongensis (strain DSM 15242 / JCM 11007 / NBRC 100824 / MB4) (Thermoanaerobacter tengcongensis).